The following is a 370-amino-acid chain: Binary larvicide subunit BinA (370 aa).

The propeptide occupies 1 to 6 (MRNLDF). A beta-trefoil domain region spans residues 1–155 (MRNLDFIDSF…LISNKEQIYL (155 aa)). Cysteine 31 and cysteine 47 are joined by a disulfide. Positions 156–370 (TLPSLPENEQ…NTKIITDDQN (215 aa)) are pore-forming domain.

This sequence belongs to the toxin_10 family. As to quaternary structure, forms a heterodimer with BinB. Processed by proteases in the mosquito gut, probably at both the N- and C-termini.

The protein localises to the spore. It localises to the perispore. Functionally, component of a binary toxin active against Culex and some Aedes mosquito larvae; mortality towards both C.quinquefasciatus and A.atropalpus is maximal by 48 hours. A.aegypti is not very susceptible to this toxin. Binary toxin internalization into host gut cells requires both proteins. The sequence is that of Binary larvicide subunit BinA (binA) from Lysinibacillus sphaericus (Bacillus sphaericus).